A 256-amino-acid polypeptide reads, in one-letter code: 1-(5-phosphoribosyl)-5-[(5-phosphoribosylamino)methylideneamino] imidazole-4-carboxamide isomerase (256 aa).

The active-site Proton acceptor is the Asp-8. The Proton donor role is filled by Asp-129.

This sequence belongs to the HisA/HisF family.

It is found in the cytoplasm. The enzyme catalyses 1-(5-phospho-beta-D-ribosyl)-5-[(5-phospho-beta-D-ribosylamino)methylideneamino]imidazole-4-carboxamide = 5-[(5-phospho-1-deoxy-D-ribulos-1-ylimino)methylamino]-1-(5-phospho-beta-D-ribosyl)imidazole-4-carboxamide. It participates in amino-acid biosynthesis; L-histidine biosynthesis; L-histidine from 5-phospho-alpha-D-ribose 1-diphosphate: step 4/9. In Prochlorococcus marinus (strain NATL2A), this protein is 1-(5-phosphoribosyl)-5-[(5-phosphoribosylamino)methylideneamino] imidazole-4-carboxamide isomerase.